The chain runs to 447 residues: NADP-specific glutamate dehydrogenase (447 aa).

Substrate contacts are provided by Lys-92, Gln-113, and Lys-116. Lys-128 acts as the Proton donor in catalysis. Gly-167 is a substrate binding site. The NADP(+) site is built by Thr-211 and Asn-242. Residue Ser-380 coordinates substrate.

Belongs to the Glu/Leu/Phe/Val dehydrogenases family. As to quaternary structure, homohexamer.

The enzyme catalyses L-glutamate + NADP(+) + H2O = 2-oxoglutarate + NH4(+) + NADPH + H(+). Catalyzes the reversible oxidative deamination of glutamate to alpha-ketoglutarate and ammonia. This Salmonella typhimurium (strain LT2 / SGSC1412 / ATCC 700720) protein is NADP-specific glutamate dehydrogenase (gdhA).